Here is a 172-residue protein sequence, read N- to C-terminus: uncharacterized protein (172 aa).

The segment at 130–154 (EQEKGAAPQEGKDWQVISEEDKKNQ) is disordered.

This is an uncharacterized protein from Bacillus subtilis (strain 168).